The sequence spans 2327 residues: Pre-mRNA-processing-splicing factor 8 homolog (2327 aa).

Residues 1-14 (MDDTNSNINQSNES) are compositionally biased toward polar residues. Residues 1 to 20 (MDDTNSNINQSNESQHLEEK) are disordered. Positions 801–1292 (TTVHWLEKRR…KIQTRVKIGL (492 aa)) are reverse transcriptase homology domain. Residues 1293-1566 (NSKMPNRFPP…TLKISLIQIF (274 aa)) form a linker region. An important for branch point selection region spans residues 1502–1515 (MKYKKLTHAQRSGL). The restriction endonuclease homology domain stretch occupies residues 1570–1740 (LWQKIHESLV…LRERIRKGLQ (171 aa)). Residues 1657 to 2023 (GDFDSHDIER…QIAEIEKQKT (367 aa)) are involved in interaction with pre-mRNA 5' splice site. An RNase H homology domain region spans residues 1755-2008 (NFGELFSNKI…ILGMEISAPS (254 aa)). The region spanning 2093-2223 (TYVFPKNILK…LTAYHLTPSG (131 aa)) is the MPN domain.

Part of the U5 snRNP complex and of the U4/U6-U5 tri-snRNP complex.

The protein resides in the nucleus speckle. In terms of biological role, functions as a scaffold that mediates the ordered assembly of spliceosomal proteins and snRNAs. Required for the assembly of the U4/U6-U5 tri-snRNP complex. Functions as a scaffold that positions spliceosomal U2, U5 and U6 snRNAs at splice sites on pre-mRNA substrates, so that splicing can occur. Interacts with both the 5' and the 3' splice site. The sequence is that of Pre-mRNA-processing-splicing factor 8 homolog (prpf8) from Dictyostelium discoideum (Social amoeba).